The sequence spans 60 residues: Large ribosomal subunit protein bL32 (60 aa).

Positions 1-28 (MAVQQNKKSRSKRDMRRSHDALTGPTLS) are disordered. Basic residues predominate over residues 7–16 (KKSRSKRDMR).

The protein belongs to the bacterial ribosomal protein bL32 family.

The sequence is that of Large ribosomal subunit protein bL32 from Cellvibrio japonicus (strain Ueda107) (Pseudomonas fluorescens subsp. cellulosa).